A 274-amino-acid chain; its full sequence is Bis(5'-nucleosyl)-tetraphosphatase, symmetrical (274 aa).

It belongs to the Ap4A hydrolase family.

It carries out the reaction P(1),P(4)-bis(5'-adenosyl) tetraphosphate + H2O = 2 ADP + 2 H(+). Hydrolyzes diadenosine 5',5'''-P1,P4-tetraphosphate to yield ADP. The sequence is that of Bis(5'-nucleosyl)-tetraphosphatase, symmetrical from Erwinia tasmaniensis (strain DSM 17950 / CFBP 7177 / CIP 109463 / NCPPB 4357 / Et1/99).